The sequence spans 398 residues: Succinate--CoA ligase [ADP-forming] subunit beta (398 aa).

One can recognise an ATP-grasp domain in the interval 9–254; it reads KRLLHTYGAP…LTEEDPKEIE (246 aa). ATP contacts are provided by residues K46, 53 to 55, E109, A112, and E117; that span reads GRG. Mg(2+)-binding residues include N209 and D223. Substrate-binding positions include N274 and 331–333; that span reads GIM.

The protein belongs to the succinate/malate CoA ligase beta subunit family. As to quaternary structure, heterotetramer of two alpha and two beta subunits. Mg(2+) serves as cofactor.

It catalyses the reaction succinate + ATP + CoA = succinyl-CoA + ADP + phosphate. The catalysed reaction is GTP + succinate + CoA = succinyl-CoA + GDP + phosphate. It participates in carbohydrate metabolism; tricarboxylic acid cycle; succinate from succinyl-CoA (ligase route): step 1/1. Functionally, succinyl-CoA synthetase functions in the citric acid cycle (TCA), coupling the hydrolysis of succinyl-CoA to the synthesis of either ATP or GTP and thus represents the only step of substrate-level phosphorylation in the TCA. The beta subunit provides nucleotide specificity of the enzyme and binds the substrate succinate, while the binding sites for coenzyme A and phosphate are found in the alpha subunit. The protein is Succinate--CoA ligase [ADP-forming] subunit beta of Brucella abortus (strain S19).